Reading from the N-terminus, the 118-residue chain is p-cumate 2,3-dioxygenase system, ferredoxin component (118 aa).

Positions 14–111 (VGLCATDDVA…VTVEGGQIFV (98 aa)) constitute a Rieske domain. [2Fe-2S] cluster is bound by residues Cys-54, His-56, Cys-74, and His-77.

Belongs to the bacterial ring-hydroxylating dioxygenase ferredoxin component family. As to quaternary structure, the p-cumate 2,3-dioxygenase multicomponent enzyme system is composed of an electron transfer component and a dioxygenase component (iron sulfur protein (ISP)). The electron transfer component is composed of a ferredoxin reductase (CmtAa) and a ferredoxin (CmtAd), and the dioxygenase component is formed of a large alpha subunit (CmtAb) and a small beta subunit (CmtAc). It depends on [2Fe-2S] cluster as a cofactor.

It participates in aromatic compound metabolism; p-cumate degradation; acetaldehyde and pyruvate from p-cumate. Functionally, component of the p-cumate 2,3-dioxygenase multicomponent enzyme system which catalyzes the incorporation of both atoms of molecular oxygen into p-cumate to form cis-2,3-dihydroxy-2,3-dihydro-p-cumate. Functions as an intermediate electron transfer protein via a specific interaction with iron sulfur protein components (ISP)(CmtAb and CmtAc). This Pseudomonas putida (Arthrobacter siderocapsulatus) protein is p-cumate 2,3-dioxygenase system, ferredoxin component.